We begin with the raw amino-acid sequence, 244 residues long: tRNA (guanine-N(1)-)-methyltransferase (244 aa).

S-adenosyl-L-methionine-binding positions include Gly113 and 133-138; that span reads IGDYVL.

It belongs to the RNA methyltransferase TrmD family. Homodimer.

It is found in the cytoplasm. It catalyses the reaction guanosine(37) in tRNA + S-adenosyl-L-methionine = N(1)-methylguanosine(37) in tRNA + S-adenosyl-L-homocysteine + H(+). Specifically methylates guanosine-37 in various tRNAs. The protein is tRNA (guanine-N(1)-)-methyltransferase of Bacillus cereus (strain G9842).